A 375-amino-acid chain; its full sequence is 23S rRNA (uracil(747)-C(5))-methyltransferase RlmC (375 aa).

Positions 3, 11, 14, and 87 each coordinate [4Fe-4S] cluster. Residues Q212, F241, E262, and N307 each contribute to the S-adenosyl-L-methionine site. C334 (nucleophile) is an active-site residue.

It belongs to the class I-like SAM-binding methyltransferase superfamily. RNA M5U methyltransferase family. RlmC subfamily.

It carries out the reaction uridine(747) in 23S rRNA + S-adenosyl-L-methionine = 5-methyluridine(747) in 23S rRNA + S-adenosyl-L-homocysteine + H(+). Its function is as follows. Catalyzes the formation of 5-methyl-uridine at position 747 (m5U747) in 23S rRNA. In Salmonella typhi, this protein is 23S rRNA (uracil(747)-C(5))-methyltransferase RlmC.